Consider the following 402-residue polypeptide: MKLMTMPSEFQKALPILTKIKEAGYEAYFVGGSVRDVLLERPIHDVDIATSSYPEETKAIFNRTVDVGIEHGTVLVLENGGEYEITTFRTEDIYVDYRRPSQVSFVRSLEEDLKRRDFTVNALALDENGQVIDKFRGLIDLKQKRLRAVGKAEERFEEDALRIMRGFRFAASLDFDIEAITFEAMRSHSPLLEKISVERSFTEFDKLLMAPHWRKGISAMIACQAYDYLPGLKQQEAGLNHLIVSLKDNFTFSDYHQAWAYVMISLAIEDPKSFLKAWKTSNDFQRYVTKLIALYRIRQERSFEKLDIYQYGKKMASLVEDLRKAQSLSVDMDRINTLDQALVIHDKHDIVLNGSHLIKDFGMKSGPQLGLMLEKVELAIVEGRLDNDFTTIEAFVREELAT.

2 residues coordinate ATP: Gly-32 and Arg-35. Residues Gly-32 and Arg-35 each contribute to the CTP site. The Mg(2+) site is built by Asp-45 and Asp-47. ATP contacts are provided by Arg-116, Asp-159, Arg-162, Arg-165, and Arg-168. CTP contacts are provided by Arg-116, Asp-159, Arg-162, Arg-165, and Arg-168.

This sequence belongs to the tRNA nucleotidyltransferase/poly(A) polymerase family. Bacterial CCA-adding enzyme type 3 subfamily. As to quaternary structure, homodimer. The cofactor is Mg(2+).

The enzyme catalyses a tRNA precursor + 2 CTP + ATP = a tRNA with a 3' CCA end + 3 diphosphate. It carries out the reaction a tRNA with a 3' CCA end + 2 CTP + ATP = a tRNA with a 3' CCACCA end + 3 diphosphate. Its function is as follows. Catalyzes the addition and repair of the essential 3'-terminal CCA sequence in tRNAs without using a nucleic acid template. Adds these three nucleotides in the order of C, C, and A to the tRNA nucleotide-73, using CTP and ATP as substrates and producing inorganic pyrophosphate. tRNA 3'-terminal CCA addition is required both for tRNA processing and repair. Also involved in tRNA surveillance by mediating tandem CCA addition to generate a CCACCA at the 3' terminus of unstable tRNAs. While stable tRNAs receive only 3'-terminal CCA, unstable tRNAs are marked with CCACCA and rapidly degraded. The protein is CCA-adding enzyme of Streptococcus pyogenes serotype M1.